A 32-amino-acid chain; its full sequence is Cytochrome b6-f complex subunit 7 (32 aa).

A helical transmembrane segment spans residues 5–25 (IFTVAGVMWALVLTGLSVGFG).

Belongs to the PetM family. As to quaternary structure, the 4 large subunits of the cytochrome b6-f complex are cytochrome b6, subunit IV (17 kDa polypeptide, PetD), cytochrome f and the Rieske protein, while the 4 small subunits are PetG, PetL, PetM and PetN. The complex functions as a dimer.

It is found in the plastid. The protein localises to the chloroplast thylakoid membrane. Component of the cytochrome b6-f complex, which mediates electron transfer between photosystem II (PSII) and photosystem I (PSI), cyclic electron flow around PSI, and state transitions. In Emiliania huxleyi (Coccolithophore), this protein is Cytochrome b6-f complex subunit 7.